The sequence spans 724 residues: Probable metal-nicotianamine transporter YSL13 (724 aa).

A disordered region spans residues 1-54; the sequence is MATVPTPSEAHGGATPTAADVEMVEASELRRRGKPSGDRATGPSRDGAAAAAEE. Helical transmembrane passes span 80 to 100, 103 to 123, 148 to 168, 190 to 210, 252 to 272, 310 to 330, 355 to 375, 423 to 443, 455 to 475, 487 to 507, 541 to 561, 603 to 623, 640 to 660, and 675 to 695; these read AFVV…KLNL, GIIP…VRLW, CVVA…ILSM, LGWI…GLVP, LGIF…YTAT, IVNV…WPLI, VFIA…KMII, IPWY…IGTV, ILVA…GTGL, LAIF…LAGL, FVSQ…VFWL, LNLC…RDLV, FYIG…LFVW, and VASG…VLAL.

Belongs to the YSL (TC 2.A.67.2) family. Expressed in leaves and at low levels in root cortex.

The protein resides in the membrane. Functionally, may be involved in the transport of nicotianamine-chelated metals. This Oryza sativa subsp. japonica (Rice) protein is Probable metal-nicotianamine transporter YSL13 (YSL13).